A 191-amino-acid polypeptide reads, in one-letter code: Fe/S biogenesis protein NfuA (191 aa).

[4Fe-4S] cluster-binding residues include cysteine 149 and cysteine 152.

It belongs to the NfuA family. As to quaternary structure, homodimer. [4Fe-4S] cluster serves as cofactor.

In terms of biological role, involved in iron-sulfur cluster biogenesis. Binds a 4Fe-4S cluster, can transfer this cluster to apoproteins, and thereby intervenes in the maturation of Fe/S proteins. Could also act as a scaffold/chaperone for damaged Fe/S proteins. This chain is Fe/S biogenesis protein NfuA, found in Salmonella typhi.